The following is a 165-amino-acid chain: Protein SprT (165 aa).

Positions 20-163 constitute a SprT-like domain; the sequence is EKLAQANLKL…RCVHCGEQLV (144 aa). His-78 is a Zn(2+) binding site. Glu-79 is a catalytic residue. Residue His-82 participates in Zn(2+) binding.

The protein belongs to the SprT family. It depends on Zn(2+) as a cofactor.

It is found in the cytoplasm. This is Protein SprT from Escherichia coli (strain K12 / MC4100 / BW2952).